Consider the following 200-residue polypeptide: ATP-dependent Clp protease proteolytic subunit (200 aa).

Catalysis depends on serine 105, which acts as the Nucleophile. Residue histidine 130 is part of the active site.

Belongs to the peptidase S14 family. Fourteen ClpP subunits assemble into 2 heptameric rings which stack back to back to give a disk-like structure with a central cavity, resembling the structure of eukaryotic proteasomes.

The protein resides in the cytoplasm. It catalyses the reaction Hydrolysis of proteins to small peptides in the presence of ATP and magnesium. alpha-casein is the usual test substrate. In the absence of ATP, only oligopeptides shorter than five residues are hydrolyzed (such as succinyl-Leu-Tyr-|-NHMec, and Leu-Tyr-Leu-|-Tyr-Trp, in which cleavage of the -Tyr-|-Leu- and -Tyr-|-Trp bonds also occurs).. Functionally, cleaves peptides in various proteins in a process that requires ATP hydrolysis. Has a chymotrypsin-like activity. Plays a major role in the degradation of misfolded proteins. In Hydrogenovibrio crunogenus (strain DSM 25203 / XCL-2) (Thiomicrospira crunogena), this protein is ATP-dependent Clp protease proteolytic subunit.